The following is a 536-amino-acid chain: Lysosomal acid glucosylceramidase (536 aa).

Residues 1 to 39 (MEFSSPSREECPKPSGRVSIMAGSLTGLLLLQAVSWASG) form the signal peptide. 2 disulfide bridges follow: C43-C55 and C57-C62. 3 N-linked (GlcNAc...) asparagine glycosylation sites follow: N58, N98, and N185. E274 (proton donor) is an active-site residue. An N-linked (GlcNAc...) asparagine glycan is attached at N309. Residue E379 is the Nucleophile of the active site. Residue N501 is glycosylated (N-linked (GlcNAc...) asparagine).

It belongs to the glycosyl hydrolase 30 family. As to quaternary structure, interacts with saposin-C. Interacts with SCARB2. Interacts with TCP1. Interacts with GRN; this interaction prevents aggregation of GBA1-SCARB2 complex via interaction with HSPA1A upon stress.

The protein localises to the lysosome membrane. It catalyses the reaction a beta-D-glucosyl-(1&lt;-&gt;1')-N-acylsphing-4-enine + H2O = an N-acylsphing-4-enine + D-glucose. The enzyme catalyses a beta-D-galactosyl-(1&lt;-&gt;1')-N-acylsphing-4-enine + H2O = an N-acylsphing-4-enine + D-galactose. It carries out the reaction cholesteryl 3-beta-D-glucoside + H2O = cholesterol + D-glucose. The catalysed reaction is a beta-D-glucosyl-(1&lt;-&gt;1')-N-acylsphing-4-enine + cholesterol = cholesteryl 3-beta-D-glucoside + an N-acylsphing-4-enine. It catalyses the reaction beta-D-glucosyl-N-(9Z-octadecenoyl)-sphing-4E-enine + cholesterol = N-(9Z-octadecenoyl)-sphing-4-enine + cholesteryl 3-beta-D-glucoside. The enzyme catalyses beta-D-glucosyl-N-octanoylsphing-4E-enine + cholesterol = N-octanoylsphing-4-enine + cholesteryl 3-beta-D-glucoside. It carries out the reaction beta-D-glucosyl-N-dodecanoylsphing-4-enine + cholesterol = N-dodecanoylsphing-4-enine + cholesteryl 3-beta-D-glucoside. The catalysed reaction is beta-D-glucosyl-(1&lt;-&gt;1)-N-octadecanoylsphing-4-enine + cholesterol = N-octadecanoylsphing-4-enine + cholesteryl 3-beta-D-glucoside. It catalyses the reaction beta-D-glucosyl-(1&lt;-&gt;1')-N-(15Z-tetracosenoyl)-sphing-4-enine + cholesterol = N-(15Z-tetracosenoyl)-sphing-4-enine + cholesteryl 3-beta-D-glucoside. The enzyme catalyses a beta-D-galactosyl-(1&lt;-&gt;1')-N-acylsphing-4-enine + cholesterol = cholesteryl 3-beta-D-galactoside + an N-acylsphing-4-enine. It carries out the reaction 1-(beta-D-galactosyl)-N-dodecanoylsphing-4-enine + cholesterol = cholesteryl 3-beta-D-galactoside + N-dodecanoylsphing-4-enine. The catalysed reaction is a beta-D-xylosyl-(1&lt;-&gt;1')-N-acylsphing-4-enine + cholesterol = cholesteryl 3-beta-D-xyloside + an N-acylsphing-4-enine. It catalyses the reaction beta-D-xylosyl-(1&lt;-&gt;1')-N-(9Z-octadecenoyl)-sphing-4-enine + cholesterol = cholesteryl 3-beta-D-xyloside + N-(9Z-octadecenoyl)-sphing-4-enine. It functions in the pathway steroid metabolism; cholesterol metabolism. Its pathway is sphingolipid metabolism. Functionally, glucosylceramidase that catalyzes, within the lysosomal compartment, the hydrolysis of glucosylceramides/GlcCers (such as beta-D-glucosyl-(1&lt;-&gt;1')-N-acylsphing-4-enine) into free ceramides (such as N-acylsphing-4-enine) and glucose. Plays a central role in the degradation of complex lipids and the turnover of cellular membranes. Through the production of ceramides, participates in the PKC-activated salvage pathway of ceramide formation. Catalyzes the glucosylation of cholesterol, through a transglucosylation reaction where glucose is transferred from GlcCer to cholesterol. GlcCer containing mono-unsaturated fatty acids (such as beta-D-glucosyl-N-(9Z-octadecenoyl)-sphing-4-enine) are preferred as glucose donors for cholesterol glucosylation when compared with GlcCer containing same chain length of saturated fatty acids (such as beta-D-glucosyl-N-octadecanoyl-sphing-4-enine). Under specific conditions, may alternatively catalyze the reverse reaction, transferring glucose from cholesteryl 3-beta-D-glucoside to ceramide. Can also hydrolyze cholesteryl 3-beta-D-glucoside producing glucose and cholesterol. Catalyzes the hydrolysis of galactosylceramides/GalCers (such as beta-D-galactosyl-(1&lt;-&gt;1')-N-acylsphing-4-enine), as well as the transfer of galactose between GalCers and cholesterol in vitro, but with lower activity than with GlcCers. Contrary to GlcCer and GalCer, xylosylceramide/XylCer (such as beta-D-xyosyl-(1&lt;-&gt;1')-N-acylsphing-4-enine) is not a good substrate for hydrolysis, however it is a good xylose donor for transxylosylation activity to form cholesteryl 3-beta-D-xyloside. The polypeptide is Lysosomal acid glucosylceramidase (GBA1) (Pan troglodytes (Chimpanzee)).